Reading from the N-terminus, the 267-residue chain is GTP cyclohydrolase MptA (267 aa).

This sequence belongs to the GTP cyclohydrolase IV family. In terms of assembly, homodimer. It depends on Fe(2+) as a cofactor.

The enzyme catalyses GTP + H2O = 7,8-dihydroneopterin 2',3'-cyclic phosphate + formate + diphosphate + H(+). Its pathway is cofactor biosynthesis; 5,6,7,8-tetrahydromethanopterin biosynthesis. Functionally, converts GTP to 7,8-dihydro-D-neopterin 2',3'-cyclic phosphate, the first intermediate in the biosynthesis of coenzyme methanopterin. The protein is GTP cyclohydrolase MptA of Pyrococcus furiosus (strain ATCC 43587 / DSM 3638 / JCM 8422 / Vc1).